A 237-amino-acid chain; its full sequence is MEKHDLLYEGKAKKIYRTDEEGLLWVEYKNSATAFNGEKKASIEGKARLNNEISSLIFSYLKEQGVDSHFVKRLSETEQLIHQVTIIPLEVVVRNVIAGSLAKRIGIEEGTPLEKPLVEFYYKDDDLGDPLVTEDHIAILQAATKEQVDILKVKAIEVNDALTTFFAGIGVKLVDFKLEFGVTADGAILLADEISPDTCRLWDAKTGERFDKDLFRRNLGNLQDGYEQILTRIEQKA.

This sequence belongs to the SAICAR synthetase family.

It carries out the reaction 5-amino-1-(5-phospho-D-ribosyl)imidazole-4-carboxylate + L-aspartate + ATP = (2S)-2-[5-amino-1-(5-phospho-beta-D-ribosyl)imidazole-4-carboxamido]succinate + ADP + phosphate + 2 H(+). It participates in purine metabolism; IMP biosynthesis via de novo pathway; 5-amino-1-(5-phospho-D-ribosyl)imidazole-4-carboxamide from 5-amino-1-(5-phospho-D-ribosyl)imidazole-4-carboxylate: step 1/2. The protein is Phosphoribosylaminoimidazole-succinocarboxamide synthase of Halalkalibacterium halodurans (strain ATCC BAA-125 / DSM 18197 / FERM 7344 / JCM 9153 / C-125) (Bacillus halodurans).